A 118-amino-acid chain; its full sequence is Small ribosomal subunit protein uS13 (118 aa).

The segment at 99-118 (GQRTRTNARTRKGPRKAIKK) is disordered.

The protein belongs to the universal ribosomal protein uS13 family. Part of the 30S ribosomal subunit. Forms a loose heterodimer with protein S19. Forms two bridges to the 50S subunit in the 70S ribosome.

Located at the top of the head of the 30S subunit, it contacts several helices of the 16S rRNA. In the 70S ribosome it contacts the 23S rRNA (bridge B1a) and protein L5 of the 50S subunit (bridge B1b), connecting the 2 subunits; these bridges are implicated in subunit movement. Contacts the tRNAs in the A and P-sites. This chain is Small ribosomal subunit protein uS13, found in Xylella fastidiosa (strain M23).